The chain runs to 198 residues: Altered inheritance of mitochondria protein 34, mitochondrial (198 aa).

A mitochondrion-targeting transit peptide spans 1-55; it reads MSISLFGRIVSQQFSGIRAAGPGRSLYLPFTLLLKQPGAYKVSLHRYVHSTQTKS. Positions 69–103 constitute an SAP domain; that stretch reads FQKFTVKVLKEQCKSRGLKLSGRKSDLLQRLITHD. A helical membrane pass occupies residues 172 to 187; it reads IFLLGFFMLSCLWWNL.

The protein belongs to the AIM34 family.

The protein resides in the mitochondrion membrane. The protein is Altered inheritance of mitochondria protein 34, mitochondrial (AIM34) of Saccharomyces cerevisiae (strain JAY291) (Baker's yeast).